Consider the following 398-residue polypeptide: 1-deoxy-D-xylulose 5-phosphate reductoisomerase (398 aa).

Thr-10, Gly-11, Ser-12, Ile-13, Lys-37, Asn-38, and Asn-124 together coordinate NADPH. 1-deoxy-D-xylulose 5-phosphate is bound at residue Lys-125. Glu-126 serves as a coordination point for NADPH. Residue Asp-150 coordinates Mn(2+). 1-deoxy-D-xylulose 5-phosphate contacts are provided by Ser-151, Glu-152, Ser-186, and His-209. Position 152 (Glu-152) interacts with Mn(2+). Residue Gly-215 coordinates NADPH. Positions 222, 227, 228, and 231 each coordinate 1-deoxy-D-xylulose 5-phosphate. Residue Glu-231 participates in Mn(2+) binding.

The protein belongs to the DXR family. In terms of assembly, homodimer. The cofactor is Mg(2+). Mn(2+) serves as cofactor.

It catalyses the reaction 2-C-methyl-D-erythritol 4-phosphate + NADP(+) = 1-deoxy-D-xylulose 5-phosphate + NADPH + H(+). It participates in isoprenoid biosynthesis; isopentenyl diphosphate biosynthesis via DXP pathway; isopentenyl diphosphate from 1-deoxy-D-xylulose 5-phosphate: step 1/6. Functionally, catalyzes the NADPH-dependent rearrangement and reduction of 1-deoxy-D-xylulose-5-phosphate (DXP) to 2-C-methyl-D-erythritol 4-phosphate (MEP). This Buchnera aphidicola subsp. Acyrthosiphon pisum (strain APS) (Acyrthosiphon pisum symbiotic bacterium) protein is 1-deoxy-D-xylulose 5-phosphate reductoisomerase.